The primary structure comprises 129 residues: Flagellar assembly factor FliW (129 aa).

It belongs to the FliW family. Interacts with translational regulator CsrA and flagellin(s).

The protein localises to the cytoplasm. Functionally, acts as an anti-CsrA protein, binds CsrA and prevents it from repressing translation of its target genes, one of which is flagellin. Binds to flagellin and participates in the assembly of the flagellum. This is Flagellar assembly factor FliW from Campylobacter jejuni subsp. doylei (strain ATCC BAA-1458 / RM4099 / 269.97).